A 536-amino-acid polypeptide reads, in one-letter code: Thiamine transport system permease protein ThiP (536 aa).

Helical transmembrane passes span 16-36, 58-78, 95-115, 134-154, 199-219, 240-260, 291-311, 334-354, 373-393, 404-424, 463-483, and 506-526; these read GLCA…ALWL, FSFW…VFLA, LCAM…LSVY, FSPY…LPMA, VAAL…SLGG, PARA…LVLL, DALL…AVVV, SLRI…MLLW, LSGM…FFLL, ADGI…LKVL, AQAL…VALF, and DGAV…TLIE. The region spanning 56 to 261 is the ABC transmembrane type-1 1 domain; the sequence is VRFSFWQAFL…VCCLALVLLS (206 aa). Residues 331 to 525 form the ABC transmembrane type-1 2 domain; sequence VWTSLRIALA…LLCFTLFTLI (195 aa).

Belongs to the binding-protein-dependent transport system permease family. In terms of assembly, the complex is composed of two ATP-binding proteins (ThiQ), two transmembrane proteins (ThiP) and a solute-binding protein (ThiB).

It localises to the cell inner membrane. In terms of biological role, part of the ABC transporter complex ThiBPQ involved in thiamine import. Probably responsible for the translocation of the substrate across the membrane. Is also involved in thiamine pyrophosphate transport. This is Thiamine transport system permease protein ThiP from Salmonella typhimurium (strain LT2 / SGSC1412 / ATCC 700720).